The sequence spans 167 residues: Ureidoglycolate lyase (167 aa).

Belongs to the ureidoglycolate lyase family. Homodimer. Ni(2+) serves as cofactor.

The enzyme catalyses (S)-ureidoglycolate = urea + glyoxylate. Its pathway is nitrogen metabolism; (S)-allantoin degradation. Functionally, catalyzes the catabolism of the allantoin degradation intermediate (S)-ureidoglycolate, generating urea and glyoxylate. Involved in the utilization of allantoin as nitrogen source. This chain is Ureidoglycolate lyase, found in Pseudomonas putida (strain W619).